A 395-amino-acid polypeptide reads, in one-letter code: Testis-expressed protein 44 (395 aa).

Disordered stretches follow at residues 1-32 (MALP…PLTA), 46-100 (WQDI…LQVS), 133-215 (KMSQ…SDES), and 235-258 (FPPP…GRRP). The segment covering 53–65 (SFKTATPRAISTS) has biased composition (polar residues). The segment covering 87–98 (PLLPSQNPSPLQ) has biased composition (low complexity). Over residues 192–207 (SAEEKAEHPKAPHPEA) the composition is skewed to basic and acidic residues. S333 bears the Phosphoserine mark.

As to expression, testis. Detected in germ cells at all stages of the seminiferous epithelium, strong expression in elongating spermatids (at protein level).

It localises to the cytoplasm. This is Testis-expressed protein 44 from Homo sapiens (Human).